We begin with the raw amino-acid sequence, 87 residues long: Cytochrome c6 (87 aa).

C10, C13, H14, and M56 together coordinate heme c.

This sequence belongs to the cytochrome c family. PetJ subfamily. As to quaternary structure, monomer. Binds 1 heme c group covalently per subunit.

It is found in the plastid. Its subcellular location is the chloroplast thylakoid lumen. Functionally, functions as an electron carrier between membrane-bound cytochrome b6-f and photosystem I in oxygenic photosynthesis. The chain is Cytochrome c6 (petJ) from Euglena viridis (Cercaria viridis).